We begin with the raw amino-acid sequence, 75 residues long: uncharacterized protein (75 aa).

The N-terminal stretch at 1–21 is a signal peptide; that stretch reads MRLIVVSIMVTLLSGCGSIIS.

This sequence to E.coli YidQ.

This is an uncharacterized protein from Escherichia coli O157:H7.